The sequence spans 151 residues: MEREGVDYHYVNREAIWKGIAAGNFLEHTEFLGNIYGTSKTAVNTAAINNRICVMDLNIDGVRSLKNTYLMPYSVYIRPTSLKMVETKLRCRNTEANDEIHRRVILAKTDMDEANEAGLFDTIIIEDDVNLAYSKLIQILQDRIRMYFNTN.

The Guanylate kinase-like domain occupies 1–141 (MEREGVDYHY…AYSKLIQILQ (141 aa)).

The protein belongs to the guanylate kinase family.

The polypeptide is Guanylate kinase homolog (Bos taurus (Bovine)).